We begin with the raw amino-acid sequence, 445 residues long: Methionine aminopeptidase 2-2 (445 aa).

The segment at 1–92 (MAAQASEDLK…RVPISQLFPN (92 aa)) is disordered. Residues 18–33 (AGDSKAAAATAGQAEA) are compositionally biased toward low complexity. Acidic residues predominate over residues 34–46 (GEAEDDSDDDEVD). A compositionally biased stretch (low complexity) spans 47 to 58 (GNAAPEGAASGA). The segment covering 59-74 (AKKKKKRKPKKKKKGG) has biased composition (basic residues). Residue histidine 198 participates in substrate binding. Residues aspartate 218, aspartate 229, and histidine 298 each contribute to the a divalent metal cation site. Substrate is bound at residue histidine 306. A divalent metal cation-binding residues include glutamate 331 and glutamate 426.

The protein belongs to the peptidase M24A family. Methionine aminopeptidase eukaryotic type 2 subfamily. The cofactor is Co(2+). Requires Zn(2+) as cofactor. It depends on Mn(2+) as a cofactor. Fe(2+) serves as cofactor.

Its subcellular location is the cytoplasm. The enzyme catalyses Release of N-terminal amino acids, preferentially methionine, from peptides and arylamides.. Its function is as follows. Cotranslationally removes the N-terminal methionine from nascent proteins. The N-terminal methionine is often cleaved when the second residue in the primary sequence is small and uncharged (Met-Ala-, Cys, Gly, Pro, Ser, Thr, or Val). The polypeptide is Methionine aminopeptidase 2-2 (Aspergillus terreus (strain NIH 2624 / FGSC A1156)).